We begin with the raw amino-acid sequence, 376 residues long: Nuclear egress protein 1 (376 aa).

Ser-19 is subject to Phosphoserine. A disordered region spans residues 22–57; the sequence is RKRRQRELASKVASTVNGATSANNHGEPPSPADARP. Polar residues predominate over residues 33–45; sequence VASTVNGATSANN. The CCCH-type zinc finger occupies 106–211; sequence CLDISPYGNE…HVIFENPDVH (106 aa). The disordered stretch occupies residues 316-376; that stretch reads VVSTNGCGPS…PLFLNSIRAP (61 aa). The span at 317-332 shows a compositional bias: polar residues; it reads VSTNGCGPSSSSQSTP.

It belongs to the herpesviridae NEC1 protein family. As to quaternary structure, forms a heterohexameric complex with NEC2. Interacts with capsid vertex specific component 2/CVC2; this interaction directs the capsid to the host inner nuclear membrane to initiate budding. In terms of processing, phosphorylated at serine residues in the N-terminus. This phosphorylation regulates the localization within the inner nuclear membrane. Phosphorylation by viral kinase UL97 at Ser-19 plays an important role for correct viral nuclear egress complex (NEC) localization.

It localises to the host nucleus inner membrane. Functionally, plays an essential role in virion nuclear egress, the first step of virion release from infected cell. Within the host nucleus, NEC1 interacts with the newly formed capsid through the vertexes and directs it to the inner nuclear membrane by associating with NEC2. Induces the budding of the capsid at the inner nuclear membrane as well as its envelopment into the perinuclear space. There, the NEC1/NEC2 complex promotes the fusion of the enveloped capsid with the outer nuclear membrane and the subsequent release of the viral capsid into the cytoplasm where it will reach the secondary budding sites in the host Golgi or trans-Golgi network. The protein is Nuclear egress protein 1 of Homo sapiens (Human).